A 119-amino-acid chain; its full sequence is Large ribosomal subunit protein uL18 (119 aa).

This sequence belongs to the universal ribosomal protein uL18 family. In terms of assembly, part of the 50S ribosomal subunit; part of the 5S rRNA/L5/L18/L25 subcomplex. Contacts the 5S and 23S rRNAs.

Its function is as follows. This is one of the proteins that bind and probably mediate the attachment of the 5S RNA into the large ribosomal subunit, where it forms part of the central protuberance. In Mycoplasmoides gallisepticum (strain R(low / passage 15 / clone 2)) (Mycoplasma gallisepticum), this protein is Large ribosomal subunit protein uL18.